The chain runs to 341 residues: Geranylfarnesyl diphosphate synthase (341 aa).

Isopentenyl diphosphate is bound by residues Lys47, Arg50, and Gln95. 2 residues coordinate Mg(2+): Asp102 and Asp106. Arg111 is a binding site for an all-trans-polyprenyl diphosphate. Arg112 serves as a coordination point for isopentenyl diphosphate. An all-trans-polyprenyl diphosphate is bound by residues Lys193, Thr194, and Gln231.

Belongs to the FPP/GGPP synthase family. As to quaternary structure, homodimer. Mg(2+) is required as a cofactor.

It localises to the cytoplasm. The catalysed reaction is isopentenyl diphosphate + (2E,6E,10E)-geranylgeranyl diphosphate = (2E,6E,10E,14E)-geranylfarnesyl diphosphate + diphosphate. In terms of biological role, probably involved in biosynthesis of the precursor for C25 (sesterterpanyl chain) moiety of C20-C25 diether (2-O-sesterterpanyl-3-O-phytanyl-sn-glycer) membrane lipid. Catalyzes the condensation of isopentenyl pyrophosphate with the allylic pyrophosphates to yield geranylfarnesyl diphosphate (GFPP). Geranylgeranyl diphosphate (GGPP) is the preferred substrate, but dimethylallyl diphosphate (DMAPP) and farnesyl diphosphate (FPP) can also be used as allylic substrate. The sequence is that of Geranylfarnesyl diphosphate synthase (idsA3) from Natronomonas pharaonis (strain ATCC 35678 / DSM 2160 / CIP 103997 / JCM 8858 / NBRC 14720 / NCIMB 2260 / Gabara) (Halobacterium pharaonis).